Reading from the N-terminus, the 600-residue chain is MVLILGRRLNREDLGVRDSPATKRKVFEMDPKSLTGHEYFDFSSGSSHAENILQIFNEFRDSRLFTDVIICVEGKEFPCHRAVLSACSSYFRAMFCNDHRESREMLVEINGILAEAMECFLQYVYTGKVKITTENVQYLFETSSLFQISVLRDACAKFLEEQLDPCNCLGIQRFADTHSLKTLFTKCKTFALQTFEDVSQHEEFLELDKDELIDYICSDELVIGKEEMVFEAVMRWVYRAVDLRRPLLHELLTHVRLPLLHPNYFVQTVEVDQLIQNSPECYQLLHEARRYHILGNEMMSPRTRPRRSTGYSEVIVVVGGCERVGGFNLPYTECYDPVTGEWKSLAKLPEFTKSEYAVCALRNDILVSGGRINSRDVWIYNSQLNIWIRVASLNKGRWRHKMAVLLGKVYVVGGYDGQNRLSSVECYDSFSNRWTEVAPLKEAVSSPAVTSCIGKLFVIGGGPDDNTCSDKVQSYDPETNSWLLRAAIPIAKRCITAVSLNNLIYVAGGLTKAVYCYDPVEDYWMHVQNTFSRQENCGMSVCNGKIYILGGRRENGEATDTILCYDPATSIITGVAAMPRPVSYHGCVTIHRYNEKCFKL.

The BTB domain occupies Thr-66–Thr-133. In terms of domain architecture, BACK spans Cys-168–Glu-270. Kelch repeat units follow at residues Val-314–Asn-363, Ile-365–Gly-407, Lys-408–Gly-454, Leu-456–Asn-502, Ile-504–Gly-544, and Ile-546–Arg-592.

Forms homodimers. Interacts with GRIK2. Component of the BCR(KLHL24) E3 ubiquitin ligase complex, composed of CUL3, RBX1 and KLHL24. Interacts with CUL3. Interacts with KRT14. In terms of processing, autoubiquitinated. Autoubiquitination leads to proteasomal degradation and is necessary to control KLHL24 levels. Expressed in the brain.

The protein resides in the perikaryon. It is found in the cell projection. Its subcellular location is the axon. It localises to the cytoplasm. The protein localises to the cell junction. The protein resides in the desmosome. It is found in the adherens junction. Functionally, controls KRT14 levels during keratinocytes differentiation. As part of the BCR(KLHL24) E3 ubiquitin ligase complex, mediates ubiquitination of KRT14. Specifically reduces kainate receptor-mediated currents in hippocampal neurons, most probably by modulating channel properties. Has a crucial role in cardiac development and function. The protein is Kelch-like protein 24 (Klhl24) of Mus musculus (Mouse).